The sequence spans 314 residues: Glutathione synthetase (314 aa).

The 187-residue stretch at 125–311 (EKLAAQLFPQ…IAGQLFDAIE (187 aa)) folds into the ATP-grasp domain. 151 to 208 (FVQKQEQAILKPLDGMGGHSIFRSSNGDPNLNVILETLTDGGRTLAIAQRYLQQIIEG) is an ATP binding site. The Mg(2+) site is built by E282 and N284.

It belongs to the prokaryotic GSH synthase family. The cofactor is Mg(2+). Requires Mn(2+) as cofactor.

It carries out the reaction gamma-L-glutamyl-L-cysteine + glycine + ATP = glutathione + ADP + phosphate + H(+). It functions in the pathway sulfur metabolism; glutathione biosynthesis; glutathione from L-cysteine and L-glutamate: step 2/2. The sequence is that of Glutathione synthetase from Xylella fastidiosa (strain 9a5c).